Here is a 423-residue protein sequence, read N- to C-terminus: Enolase (423 aa).

Gln162 lines the (2R)-2-phosphoglycerate pocket. The active-site Proton donor is Glu204. Asp241, Glu284, and Asp311 together coordinate Mg(2+). 4 residues coordinate (2R)-2-phosphoglycerate: Lys336, Arg365, Ser366, and Lys387. Lys336 serves as the catalytic Proton acceptor.

It belongs to the enolase family. Requires Mg(2+) as cofactor.

It localises to the cytoplasm. The protein resides in the secreted. The protein localises to the cell surface. It catalyses the reaction (2R)-2-phosphoglycerate = phosphoenolpyruvate + H2O. The protein operates within carbohydrate degradation; glycolysis; pyruvate from D-glyceraldehyde 3-phosphate: step 4/5. Its function is as follows. Catalyzes the reversible conversion of 2-phosphoglycerate (2-PG) into phosphoenolpyruvate (PEP). It is essential for the degradation of carbohydrates via glycolysis. This Bartonella bacilliformis (strain ATCC 35685 / KC583 / Herrer 020/F12,63) protein is Enolase.